The chain runs to 363 residues: Inositol-3-phosphate synthase (363 aa).

NAD(+)-binding residues include Asp68, Ala127, Tyr147, Ser190, Asp225, and Lys238.

Belongs to the myo-inositol 1-phosphate synthase family. Monomer. NAD(+) is required as a cofactor.

The catalysed reaction is D-glucose 6-phosphate = 1D-myo-inositol 3-phosphate. Its pathway is polyol metabolism; myo-inositol biosynthesis; myo-inositol from D-glucose 6-phosphate: step 1/2. Functionally, key enzyme in myo-inositol biosynthesis pathway that catalyzes the conversion of glucose 6-phosphate to 1D-myo-inositol 3-phosphate in a NAD-dependent manner. Plays a key role in oxidative stress resistance as its product is the precursor of the protective antioxidant mycothiol (MSH or AcCys-GlcN-Ins). The sequence is that of Inositol-3-phosphate synthase from Corynebacterium glutamicum (strain ATCC 13032 / DSM 20300 / JCM 1318 / BCRC 11384 / CCUG 27702 / LMG 3730 / NBRC 12168 / NCIMB 10025 / NRRL B-2784 / 534).